Here is a 128-residue protein sequence, read N- to C-terminus: Sulfurtransferase TusD (128 aa).

Cys-78 acts as the Cysteine persulfide intermediate in catalysis.

Belongs to the DsrE/TusD family. In terms of assembly, heterohexamer, formed by a dimer of trimers. The hexameric TusBCD complex contains 2 copies each of TusB, TusC and TusD. The TusBCD complex interacts with TusE.

The protein localises to the cytoplasm. Functionally, part of a sulfur-relay system required for 2-thiolation of 5-methylaminomethyl-2-thiouridine (mnm(5)s(2)U) at tRNA wobble positions. Accepts sulfur from TusA and transfers it in turn to TusE. The chain is Sulfurtransferase TusD from Escherichia coli O17:K52:H18 (strain UMN026 / ExPEC).